The following is a 156-amino-acid chain: Small ribosomal subunit protein uS7 (156 aa).

This sequence belongs to the universal ribosomal protein uS7 family. Part of the 30S ribosomal subunit. Contacts proteins S9 and S11.

In terms of biological role, one of the primary rRNA binding proteins, it binds directly to 16S rRNA where it nucleates assembly of the head domain of the 30S subunit. Is located at the subunit interface close to the decoding center, probably blocks exit of the E-site tRNA. The protein is Small ribosomal subunit protein uS7 of Rhizobium rhizogenes (strain K84 / ATCC BAA-868) (Agrobacterium radiobacter).